We begin with the raw amino-acid sequence, 338 residues long: Aspartate carbamoyltransferase catalytic subunit (338 aa).

Carbamoyl phosphate is bound by residues arginine 57 and threonine 58. Lysine 86 serves as a coordination point for L-aspartate. Positions 107, 135, and 138 each coordinate carbamoyl phosphate. L-aspartate is bound by residues arginine 172 and arginine 234. Positions 274 and 275 each coordinate carbamoyl phosphate.

This sequence belongs to the aspartate/ornithine carbamoyltransferase superfamily. ATCase family. Heterododecamer (2C3:3R2) of six catalytic PyrB chains organized as two trimers (C3), and six regulatory PyrI chains organized as three dimers (R2).

The enzyme catalyses carbamoyl phosphate + L-aspartate = N-carbamoyl-L-aspartate + phosphate + H(+). Its pathway is pyrimidine metabolism; UMP biosynthesis via de novo pathway; (S)-dihydroorotate from bicarbonate: step 2/3. Its function is as follows. Catalyzes the condensation of carbamoyl phosphate and aspartate to form carbamoyl aspartate and inorganic phosphate, the committed step in the de novo pyrimidine nucleotide biosynthesis pathway. The sequence is that of Aspartate carbamoyltransferase catalytic subunit from Cellvibrio japonicus (strain Ueda107) (Pseudomonas fluorescens subsp. cellulosa).